We begin with the raw amino-acid sequence, 218 residues long: Glutathione S-transferase class-mu 26 kDa isozyme 7 (218 aa).

One can recognise a GST N-terminal domain in the interval P2 to G83. Residues Y7–W8, W41–K45, N54–L55, and Q67–S68 each bind glutathione. The 119-residue stretch at T85–L203 folds into the GST C-terminal domain. Y111 contributes to the substrate binding site.

The protein belongs to the GST superfamily. Mu family. In terms of assembly, homodimer.

It catalyses the reaction RX + glutathione = an S-substituted glutathione + a halide anion + H(+). Functionally, conjugation of reduced glutathione to a wide number of exogenous and endogenous hydrophobic electrophiles. GST isoenzymes appear to play a central role in the parasite detoxification system. Other functions are also suspected including a role in increasing the solubility of haematin in the parasite gut. The protein is Glutathione S-transferase class-mu 26 kDa isozyme 7 of Fasciola hepatica (Liver fluke).